Here is a 309-residue protein sequence, read N- to C-terminus: GTP cyclohydrolase MptA (309 aa).

It belongs to the GTP cyclohydrolase IV family. Homodimer. The cofactor is Fe(2+).

The catalysed reaction is GTP + H2O = 7,8-dihydroneopterin 2',3'-cyclic phosphate + formate + diphosphate + H(+). The protein operates within cofactor biosynthesis; 5,6,7,8-tetrahydromethanopterin biosynthesis. In terms of biological role, converts GTP to 7,8-dihydro-D-neopterin 2',3'-cyclic phosphate, the first intermediate in the biosynthesis of coenzyme methanopterin. The chain is GTP cyclohydrolase MptA from Methanococcus aeolicus (strain ATCC BAA-1280 / DSM 17508 / OCM 812 / Nankai-3).